A 220-amino-acid chain; its full sequence is Glycerol-3-phosphate acyltransferase (220 aa).

The next 5 helical transmembrane spans lie at 4-24 (LTIL…AVLV), 53-73 (VAAL…VYLA), 80-100 (PVYL…PIFF), 116-136 (MPIG…VLLV), and 138-158 (GYSS…TYLI). The interval 193 to 220 (WGRQAQRRQEEVGEMDDVAQKRDERDKK) is disordered. Positions 210–220 (VAQKRDERDKK) are enriched in basic and acidic residues.

Belongs to the PlsY family. As to quaternary structure, probably interacts with PlsX.

It localises to the cell inner membrane. The catalysed reaction is an acyl phosphate + sn-glycerol 3-phosphate = a 1-acyl-sn-glycero-3-phosphate + phosphate. Its pathway is lipid metabolism; phospholipid metabolism. Catalyzes the transfer of an acyl group from acyl-phosphate (acyl-PO(4)) to glycerol-3-phosphate (G3P) to form lysophosphatidic acid (LPA). This enzyme utilizes acyl-phosphate as fatty acyl donor, but not acyl-CoA or acyl-ACP. The chain is Glycerol-3-phosphate acyltransferase from Aeromonas salmonicida (strain A449).